A 215-amino-acid polypeptide reads, in one-letter code: Triosephosphate isomerase (215 aa).

Catalysis depends on H82, which acts as the Electrophile. The active-site Proton acceptor is the E153.

This sequence belongs to the triosephosphate isomerase family. As to quaternary structure, homodimer.

It catalyses the reaction D-glyceraldehyde 3-phosphate = dihydroxyacetone phosphate. It functions in the pathway carbohydrate biosynthesis; gluconeogenesis. It participates in carbohydrate degradation; glycolysis; D-glyceraldehyde 3-phosphate from glycerone phosphate: step 1/1. The sequence is that of Triosephosphate isomerase (Tpi) from Heliothis virescens (Tobacco budworm moth).